The following is a 137-amino-acid chain: Large ribosomal subunit protein uL16c (137 aa).

The protein belongs to the universal ribosomal protein uL16 family. As to quaternary structure, part of the 50S ribosomal subunit.

The protein resides in the plastid. The protein localises to the chloroplast. This is Large ribosomal subunit protein uL16c from Thalassiosira pseudonana (Marine diatom).